Reading from the N-terminus, the 290-residue chain is ADP-dependent (S)-NAD(P)H-hydrate dehydratase (290 aa).

Residues 5–278 enclose the YjeF C-terminal domain; it reads NQTLLEKVII…RYLPKIMKII (274 aa). Residues Ala-40, Gly-103, and His-152 each coordinate (6S)-NADPHX. Gly-218 contributes to the AMP binding site. Asp-219 lines the (6S)-NADPHX pocket.

It belongs to the NnrD/CARKD family. In terms of assembly, homotetramer. It depends on Mg(2+) as a cofactor.

It catalyses the reaction (6S)-NADHX + ADP = AMP + phosphate + NADH + H(+). The enzyme catalyses (6S)-NADPHX + ADP = AMP + phosphate + NADPH + H(+). Its function is as follows. Catalyzes the dehydration of the S-form of NAD(P)HX at the expense of ADP, which is converted to AMP. Together with NAD(P)HX epimerase, which catalyzes the epimerization of the S- and R-forms, the enzyme allows the repair of both epimers of NAD(P)HX, a damaged form of NAD(P)H that is a result of enzymatic or heat-dependent hydration. This is ADP-dependent (S)-NAD(P)H-hydrate dehydratase from Streptococcus pneumoniae (strain ATCC BAA-255 / R6).